Reading from the N-terminus, the 350-residue chain is MSQSVPSFQIEPVSKAQDQFIQQKIDLKTKPPGALGLLEPLALQIARIQGPQQLQIVNPTMLVFAGDHGIAAEGVSIAPSEVTRQMVQNFAHGGAAINVFCRQLGFNLEVIDCGILTPVEGVEGIIDQRLGAGTGAIHLEPAMSLACVDKGFAMAQALIERHHQAGCNLVAFGEMGIGNTSSAAAIMAAIMQLDVADCVGRGTGISSETLERKQMLIELALLLHQSAMTGPKQVLACLGGFEIVQMTGAMLAAAERKMLVVVDGFIATAAALVAVTINAHVRDYLIFAHRSEEQGHQRMLEHLKAKPLLSLGLRLGEGTGAALALPLIQAAVNFYNQMASFSDAGIEAVV.

Residue glutamate 317 is the Proton acceptor of the active site.

The protein belongs to the CobT family.

The enzyme catalyses 5,6-dimethylbenzimidazole + nicotinate beta-D-ribonucleotide = alpha-ribazole 5'-phosphate + nicotinate + H(+). The protein operates within nucleoside biosynthesis; alpha-ribazole biosynthesis; alpha-ribazole from 5,6-dimethylbenzimidazole: step 1/2. Catalyzes the synthesis of alpha-ribazole-5'-phosphate from nicotinate mononucleotide (NAMN) and 5,6-dimethylbenzimidazole (DMB). The polypeptide is Nicotinate-nucleotide--dimethylbenzimidazole phosphoribosyltransferase (Shewanella sp. (strain MR-7)).